Reading from the N-terminus, the 77-residue chain is Large ribosomal subunit protein bL28 (77 aa).

Belongs to the bacterial ribosomal protein bL28 family.

In Ralstonia nicotianae (strain ATCC BAA-1114 / GMI1000) (Ralstonia solanacearum), this protein is Large ribosomal subunit protein bL28.